Consider the following 424-residue polypeptide: Glucose-1-phosphate adenylyltransferase (424 aa).

Alpha-D-glucose 1-phosphate is bound by residues tyrosine 112, glycine 177, 192-193 (EK), and serine 210.

This sequence belongs to the bacterial/plant glucose-1-phosphate adenylyltransferase family. As to quaternary structure, homotetramer.

It carries out the reaction alpha-D-glucose 1-phosphate + ATP + H(+) = ADP-alpha-D-glucose + diphosphate. Its pathway is glycan biosynthesis; glycogen biosynthesis. Functionally, involved in the biosynthesis of ADP-glucose, a building block required for the elongation reactions to produce glycogen. Catalyzes the reaction between ATP and alpha-D-glucose 1-phosphate (G1P) to produce pyrophosphate and ADP-Glc. The sequence is that of Glucose-1-phosphate adenylyltransferase from Methylococcus capsulatus (strain ATCC 33009 / NCIMB 11132 / Bath).